A 251-amino-acid polypeptide reads, in one-letter code: Duodenase-1 (251 aa).

A signal peptide spans 1 to 17 (MVLLLLLVALLSPTGEA). The propeptide occupies 18–19 (GK). A Peptidase S1 domain is found at 20 to 242 (IIGGHEAKPH…SFLSWIHSTM (223 aa)). Residues Cys48 and Cys64 are joined by a disulfide bond. His63 functions as the Charge relay system in the catalytic mechanism. Residue Asn70 is glycosylated (N-linked (GlcNAc...) asparagine). Catalysis depends on Asp107, which acts as the Charge relay system. Intrachain disulfides connect Cys141–Cys207 and Cys172–Cys186. Ser201 (charge relay system) is an active-site residue.

Belongs to the peptidase S1 family. In terms of assembly, monomer.

In terms of biological role, protease which has both trypsin-like and chymotrypsin-like activities. Shows a preferential cleavage after Lys, Arg, Tyr, Phe, and Leu residues. The chain is Duodenase-1 (BDMD1) from Bos taurus (Bovine).